A 525-amino-acid polypeptide reads, in one-letter code: Averantin hydroxylase (525 aa).

A helical transmembrane segment spans residues 36-56; that stretch reads VLATFVAGIGALLLWTLTTVF. The N-linked (GlcNAc...) asparagine glycan is linked to N315. C462 contacts heme.

Belongs to the cytochrome P450 family. Heme is required as a cofactor.

The protein resides in the membrane. It catalyses the reaction (1'S)-averantin + reduced [NADPH--hemoprotein reductase] + O2 = (1'S,5'R)-5'-hydroxyaverantin + oxidized [NADPH--hemoprotein reductase] + H2O. It carries out the reaction (1'S)-averantin + reduced [NADPH--hemoprotein reductase] + O2 = (1'S,5'S)-5'-hydroxyaverantin + oxidized [NADPH--hemoprotein reductase] + H2O + H(+). Its pathway is mycotoxin biosynthesis. Its function is as follows. Averantin hydroxylase; part of the fragmented gene cluster that mediates the biosynthesis of dothistromin (DOTH), a polyketide toxin very similar in structure to the aflatoxin precursor, versicolorin B. The first step of the pathway is the conversion of acetate to norsolorinic acid (NOR) and requires the fatty acid synthase subunits hexA and hexB, as well as the polyketide synthase pksA. PksA combines a hexanoyl starter unit and 7 malonyl-CoA extender units to synthesize the precursor NOR. The hexanoyl starter unit is provided to the acyl-carrier protein (ACP) domain by the fungal fatty acid synthase hexA/hexB. The second step is the conversion of NOR to averantin (AVN) and requires the norsolorinic acid ketoreductase nor1, which catalyzes the dehydration of norsolorinic acid to form (1'S)-averantin. The cytochrome P450 monooxygenase avnA then catalyzes the hydroxylation of AVN to 5'hydroxyaverantin (HAVN). The next step is performed by adhA that transforms HAVN to averufin (AVF). Averufin might then be converted to hydroxyversicolorone by cypX and avfA. Hydroxyversicolorone is further converted versiconal hemiacetal acetate (VHA) by moxY. VHA is then the substrate for the versiconal hemiacetal acetate esterase est1 to yield versiconal (VAL). Versicolorin B synthase vbsA then converts VAL to versicolorin B (VERB) by closing the bisfuran ring. Then, the activity of the versicolorin B desaturase verB leads to versicolorin A (VERA). DotB, a predicted chloroperoxidase, may perform epoxidation of the A-ring of VERA. Alternatively, a cytochrome P450, such as cypX or avnA could catalyze this step. It is also possible that another, uncharacterized, cytochrome P450 enzyme is responsible for this step. Opening of the epoxide could potentially be achieved by the epoxide hydrolase epoA. However, epoA seems not to be required for DOTH biosynthesis, but other epoxide hydrolases may have the ability to complement this hydrolysis. Alternatively, opening of the epoxide ring could be achieved non-enzymatically. The next step is the deoxygenation of ring A to yield the 5,8-dihydroxyanthraquinone which is most likely catalyzed by the NADPH dehydrogenase encoded by ver1. The last stages of DOTH biosynthesis are proposed to involve hydroxylation of the bisfuran. OrdB and norB might have oxidative roles here. An alternative possibility is that cytochrome P450 monoogenases such as avnA and cypX might perform these steps in addition to previously proposed steps. In Dothistroma septosporum (strain NZE10 / CBS 128990) (Red band needle blight fungus), this protein is Averantin hydroxylase.